Consider the following 307-residue polypeptide: MEFVFLGTGAGVPSKGRNVSAIALQLLEERGQTWLFDCGEATQHQILHTSVRPRRIEKIFITHLHGDHIFGLPGLLGSRSFQGGTTPLTVYGPKGIKQFIEVALSVSTTHVKYPLEIVEITEEGTVFEDNEFHVETKRLSHGIECFGYRIIEKDIQGALLVDKLLEMGVKPGPLFKRLKDGEVVELENGTILNGNDFIGPPQKGRVITILGDTRYCEASRELAQDADVLVHEATFAAEDEQQAYDYFHSTSKQAASIALQANAKRLILTHISSRYQGDTYKELLKEARELFSNTEIATDLKSFPVDR.

Zn(2+) contacts are provided by His63, His65, Asp67, His68, His141, Asp212, and His270. Asp67 functions as the Proton acceptor in the catalytic mechanism.

This sequence belongs to the RNase Z family. As to quaternary structure, homodimer. It depends on Zn(2+) as a cofactor.

It catalyses the reaction Endonucleolytic cleavage of RNA, removing extra 3' nucleotides from tRNA precursor, generating 3' termini of tRNAs. A 3'-hydroxy group is left at the tRNA terminus and a 5'-phosphoryl group is left at the trailer molecule.. Functionally, zinc phosphodiesterase, which displays some tRNA 3'-processing endonuclease activity. Probably involved in tRNA maturation, by removing a 3'-trailer from precursor tRNA. This is Ribonuclease Z from Bacillus thuringiensis subsp. konkukian (strain 97-27).